A 404-amino-acid chain; its full sequence is G2/mitotic-specific cyclin-B1 (404 aa).

Belongs to the cyclin family. Cyclin AB subfamily. Interacts with the CDK1 protein kinase to form a serine/threonine kinase holoenzyme complex also known as maturation promoting factor (MPF). The cyclin subunit imparts substrate specificity to the complex.

Its function is as follows. Essential for the control of the cell cycle at the G2/M (mitosis) transition. The polypeptide is G2/mitotic-specific cyclin-B1 (ccnb1) (Oryzias latipes (Japanese rice fish)).